Reading from the N-terminus, the 536-residue chain is MSKFVFVTGGVVSSIGKGIVAASLGRLLKSRGYSVSILKLDPYLNVDPGTMSPFQHGEVFVTEDGAETDLDLGHYERFTDTAMTRLNSVTTGSIYQAVINKERRGSYNGGTVQVIPHITREIRERIHRVAANSNADIVITEIGGTVGDIESLPFLEAIREFKNDVNKNDVAYIHVTLLPYIKTSGEIKTKPTQHSVKELRSIGIQPDLLVCRSDKEINEGLKRKLSGFCGVNLNCVIEALDADSIYSVPLSLKNEGLCKQTLNCLELEDKECDLENWEKIIHNLRNPGNPIKVALVGKYIELGDAYLSVVEALRHACIEQKALLDLYWISAEMIEEKSAEEYLNDVDAIVVPGGFGNRGVNGKIEAIKFAREKNIPFLGLCLGMQCAVIEWARNIAQLPDASSSELNPDSENPVIHLLPEQEDIVDLGGTMRLGVYPCRLQKNTTGKELYNEDVIYERHRHRYEFNNYYKQSFLDSGYKISGTSPDGRLVELIELVDHPYFLACQYHPEFLSRPGKPHPLFKGLIKASQEKLEQSN.

Positions 1-267 (MSKFVFVTGG…CKQTLNCLEL (267 aa)) are amidoligase domain. Residue S13 participates in CTP binding. Residue S13 coordinates UTP. ATP is bound by residues 14–19 (SIGKGI) and D71. D71 and E141 together coordinate Mg(2+). Residues 148–150 (DIE), 188–193 (KTKPTQ), and K224 contribute to the CTP site. UTP-binding positions include 188–193 (KTKPTQ) and K224. A Glutamine amidotransferase type-1 domain is found at 292-534 (KVALVGKYIE…IKASQEKLEQ (243 aa)). Residue G354 coordinates L-glutamine. Catalysis depends on C381, which acts as the Nucleophile; for glutamine hydrolysis. L-glutamine is bound by residues 382-385 (LGMQ), E405, and R462. Residues H507 and E509 contribute to the active site.

The protein belongs to the CTP synthase family. As to quaternary structure, homotetramer.

The catalysed reaction is UTP + L-glutamine + ATP + H2O = CTP + L-glutamate + ADP + phosphate + 2 H(+). It catalyses the reaction L-glutamine + H2O = L-glutamate + NH4(+). The enzyme catalyses UTP + NH4(+) + ATP = CTP + ADP + phosphate + 2 H(+). It participates in pyrimidine metabolism; CTP biosynthesis via de novo pathway; CTP from UDP: step 2/2. With respect to regulation, allosterically activated by GTP, when glutamine is the substrate; GTP has no effect on the reaction when ammonia is the substrate. The allosteric effector GTP functions by stabilizing the protein conformation that binds the tetrahedral intermediate(s) formed during glutamine hydrolysis. Inhibited by the product CTP, via allosteric rather than competitive inhibition. Its function is as follows. Catalyzes the ATP-dependent amination of UTP to CTP with either L-glutamine or ammonia as the source of nitrogen. Regulates intracellular CTP levels through interactions with the four ribonucleotide triphosphates. This is CTP synthase from Prochlorococcus marinus subsp. pastoris (strain CCMP1986 / NIES-2087 / MED4).